A 387-amino-acid chain; its full sequence is Dual-specificity RNA methyltransferase RlmN (387 aa).

E110 serves as the catalytic Proton acceptor. The region spanning 117–349 is the Radical SAM core domain; the sequence is VGKAGALCVS…NRAGYASPIR (233 aa). Residues C124 and C360 are joined by a disulfide bond. The [4Fe-4S] cluster site is built by C131, C135, and C138. Residues 186-187, S218, 240-242, and N317 contribute to the S-adenosyl-L-methionine site; these read GE and SLH. The active-site S-methylcysteine intermediate is C360.

The protein belongs to the radical SAM superfamily. RlmN family. It depends on [4Fe-4S] cluster as a cofactor.

The protein localises to the cytoplasm. It catalyses the reaction adenosine(2503) in 23S rRNA + 2 reduced [2Fe-2S]-[ferredoxin] + 2 S-adenosyl-L-methionine = 2-methyladenosine(2503) in 23S rRNA + 5'-deoxyadenosine + L-methionine + 2 oxidized [2Fe-2S]-[ferredoxin] + S-adenosyl-L-homocysteine. The catalysed reaction is adenosine(37) in tRNA + 2 reduced [2Fe-2S]-[ferredoxin] + 2 S-adenosyl-L-methionine = 2-methyladenosine(37) in tRNA + 5'-deoxyadenosine + L-methionine + 2 oxidized [2Fe-2S]-[ferredoxin] + S-adenosyl-L-homocysteine. Specifically methylates position 2 of adenine 2503 in 23S rRNA and position 2 of adenine 37 in tRNAs. m2A2503 modification seems to play a crucial role in the proofreading step occurring at the peptidyl transferase center and thus would serve to optimize ribosomal fidelity. This is Dual-specificity RNA methyltransferase RlmN from Hyphomonas neptunium (strain ATCC 15444).